The sequence spans 241 residues: 3-deoxy-manno-octulosonate cytidylyltransferase (241 aa).

The protein belongs to the KdsB family.

The protein resides in the cytoplasm. The catalysed reaction is 3-deoxy-alpha-D-manno-oct-2-ulosonate + CTP = CMP-3-deoxy-beta-D-manno-octulosonate + diphosphate. It participates in nucleotide-sugar biosynthesis; CMP-3-deoxy-D-manno-octulosonate biosynthesis; CMP-3-deoxy-D-manno-octulosonate from 3-deoxy-D-manno-octulosonate and CTP: step 1/1. It functions in the pathway bacterial outer membrane biogenesis; lipopolysaccharide biosynthesis. Its function is as follows. Activates KDO (a required 8-carbon sugar) for incorporation into bacterial lipopolysaccharide in Gram-negative bacteria. This is 3-deoxy-manno-octulosonate cytidylyltransferase from Rickettsia typhi (strain ATCC VR-144 / Wilmington).